The following is a 477-amino-acid chain: Salivary plasminogen activator alpha 2 (477 aa).

Positions 1–36 are cleaved as a signal peptide; the sequence is MVNTMKTKLLCVLLLCGAVFSLPRQETYRQLARGSR. A Fibronectin type-I domain is found at 40–82; the sequence is VACRDEKTQMIYQQQESWLRPEVRSKRVEHCRCDRGLAQCHTV. 14 disulfides stabilise this stretch: Cys-42/Cys-72, Cys-70/Cys-79, Cys-87/Cys-98, Cys-92/Cys-109, Cys-111/Cys-120, Cys-128/Cys-209, Cys-149/Cys-191, Cys-180/Cys-204, Cys-214/Cys-345, Cys-257/Cys-273, Cys-265/Cys-334, Cys-359/Cys-434, Cys-391/Cys-407, and Cys-424/Cys-452. The region spanning 83 to 121 is the EGF-like domain; it reads PVKSCSELRCFNGGTCWQAASFSDFVCQCPKGYTGKQCE. The Kringle domain occupies 128-209; it reads CYKDQGVTYR…ILEFCSVPVC (82 aa). Residue Asn-185 is glycosylated (N-linked (GlcNAc...) asparagine). In terms of domain architecture, Peptidase S1 spans 226–476; that stretch reads STGGLFTDIT…YLGWIRDNMR (251 aa). Catalysis depends on charge relay system residues His-272 and Asp-321. Asn-398 is a glycosylation site (N-linked (GlcNAc...) asparagine). Ser-428 functions as the Charge relay system in the catalytic mechanism.

It belongs to the peptidase S1 family. As to quaternary structure, monomer.

It is found in the secreted. The enzyme catalyses Specific cleavage of Arg-|-Val bond in plasminogen to form plasmin.. Activity toward plasminogen is stimulated in the presence of fibrin I. Functionally, probably essential to support the feeding habits of this exclusively haematophagous animal. Probable potent thrombolytic agent. This Desmodus rotundus (Vampire bat) protein is Salivary plasminogen activator alpha 2.